We begin with the raw amino-acid sequence, 127 residues long: RxLR effector protein SFI3 (127 aa).

Positions 1–20 (MRFLLVAVVAMMALVSSSTA) are cleaved as a signal peptide. A RxLR-dEER motif is present at residues 40–62 (RSLRNTEERSIAAILAEAGEEDR). The interval 72–107 (WYKAKLTPTQVKTVLGVSQAEMNNVAKQLQRLYLGY) is WY-domain.

The protein belongs to the RxLR effector family. Forms an unusual trans-homodimer. Interacts with host UBK.

It localises to the secreted. The protein resides in the host nucleus. The protein localises to the host nucleolus. In terms of biological role, effector that suppresses flg22-induced post-translational MAP kinase activation in potato and tomato, but not in Arabidopsis. The perception of highly conserved pathogen- or microbe-associated molecular patterns (PAMPs/MAMPs), such as flg22, triggers converging signaling pathways recruiting MAP kinase cascades and inducing transcriptional re-programming, yielding a generic antimicrobial response. Does not suppress programmed cell death triggered by the P.infestans elicitin infestin-1 (INF1), or by co-expression of tomato Cf4 with Cladosporium fulvum Avr4. Suppresses early pattern-triggered immunity (PTI) via interaction with the U-box-kinase protein UBK, a positive regulator of specific PTI pathways in both potato and Nicotiana benthamiana. This is RxLR effector protein SFI3 from Phytophthora infestans (strain T30-4) (Potato late blight agent).